Consider the following 107-residue polypeptide: UPF0213 protein SG0387 (107 aa).

Residues 4 to 79 (SLWHLYLIRT…KQLSRAQKEH (76 aa)) form the GIY-YIG domain.

This sequence belongs to the UPF0213 family.

The polypeptide is UPF0213 protein SG0387 (Sodalis glossinidius (strain morsitans)).